Here is a 150-residue protein sequence, read N- to C-terminus: Molybdopterin synthase catalytic subunit (150 aa).

Substrate is bound by residues 37-39 (KVR), 103-104 (HR), K119, and 126-128 (KRE).

It belongs to the MoaE family. Heterotetramer of 2 MoaD subunits and 2 MoaE subunits. Also stable as homodimer. The enzyme changes between these two forms during catalysis.

The enzyme catalyses 2 [molybdopterin-synthase sulfur-carrier protein]-C-terminal-Gly-aminoethanethioate + cyclic pyranopterin phosphate + H2O = molybdopterin + 2 [molybdopterin-synthase sulfur-carrier protein]-C-terminal Gly-Gly + 2 H(+). It participates in cofactor biosynthesis; molybdopterin biosynthesis. Its function is as follows. Converts molybdopterin precursor Z into molybdopterin. This requires the incorporation of two sulfur atoms into precursor Z to generate a dithiolene group. The sulfur is provided by MoaD. This Salmonella typhi protein is Molybdopterin synthase catalytic subunit (moaE).